A 229-amino-acid polypeptide reads, in one-letter code: Peroxiredoxin-like 2A (229 aa).

The thioredoxin fold stretch occupies residues 14 to 112 (MWSIGVGAFG…DELGVPLYAV (99 aa)). Active-site redox-active residues include Cys-85 and Cys-88.

This sequence belongs to the peroxiredoxin-like PRXL2 family. PRXL2A subfamily. As to expression, expressed by the principal cells of the epididymis. Detected in the head region of epididymal sperm (at protein level). Expressed in bone marrow.

The protein localises to the cytoplasm. It is found in the secreted. Functionally, involved in redox regulation of the cell. Acts as an antioxidant. Inhibits TNFSF11-induced NFKB1 and JUN activation and osteoclast differentiation. May affect bone resorption and help to maintain bone mass. Acts as a negative regulator of macrophage-mediated inflammation by inhibiting macrophage production of inflammatory cytokines, probably through suppression of the MAPK signaling pathway. The sequence is that of Peroxiredoxin-like 2A from Rattus norvegicus (Rat).